An 896-amino-acid chain; its full sequence is Rho GTPase-activating protein gacM (896 aa).

The tract at residues 1-97 is disordered; that stretch reads MSSFIGWKKN…SSNDTIGKSS (97 aa). A compositionally biased stretch (low complexity) spans 10–26; it reads NSNSGGTPGASPTSSSP. The span at 27–38 shows a compositional bias: polar residues; that stretch reads LNSTISNANSVS. Composition is skewed to low complexity over residues 45–57 and 65–97; these read SISN…LSSS and NSNN…GKSS. The Rho-GAP domain occupies 139-330; that stretch reads QPINPNTEFG…LWIEEFDMIS (192 aa). 4 stretches are compositionally biased toward low complexity: residues 375–391, 400–427, 448–460, and 473–506; these read IQQQ…QSHP, SSLS…LLPT, PTPT…TPQT, and NNNS…NNNN. 2 disordered regions span residues 375 to 514 and 701 to 770; these read IQQQ…GSPL and LPTG…ENQI. The span at 702-711 shows a compositional bias: polar residues; sequence PTGSSWSDFE. Low complexity-rich tracts occupy residues 712–743 and 751–761; these read NNSS…NSSP and SNGLNSSSNSN.

It is found in the cytoplasm. Functionally, rho GTPase-activating protein involved in the signal transduction pathway. The sequence is that of Rho GTPase-activating protein gacM (gacM) from Dictyostelium discoideum (Social amoeba).